Here is a 255-residue protein sequence, read N- to C-terminus: Ribonuclease HII (255 aa).

Residues 72 to 255 form the RNase H type-2 domain; it reads AIICGIDEVG…KSFEPIKSLL (184 aa). The a divalent metal cation site is built by Asp-78, Glu-79, and Asp-170.

It belongs to the RNase HII family. Requires Mn(2+) as cofactor. Mg(2+) is required as a cofactor.

It is found in the cytoplasm. It catalyses the reaction Endonucleolytic cleavage to 5'-phosphomonoester.. Endonuclease that specifically degrades the RNA of RNA-DNA hybrids. This is Ribonuclease HII from Staphylococcus aureus (strain Mu3 / ATCC 700698).